The following is a 137-amino-acid chain: uncharacterized protein (137 aa).

This is an uncharacterized protein from Mycobacterium tuberculosis (strain ATCC 25618 / H37Rv).